Consider the following 168-residue polypeptide: Small ribosomal subunit protein uS5c (168 aa).

In terms of domain architecture, S5 DRBM spans 17-80 (WSERVIQITR…SDCKKQIIEF (64 aa)).

This sequence belongs to the universal ribosomal protein uS5 family. As to quaternary structure, part of the 30S ribosomal subunit. Contacts protein S4.

It is found in the plastid. Its subcellular location is the chloroplast. In terms of biological role, with S4 and S12 plays an important role in translational accuracy. The chain is Small ribosomal subunit protein uS5c (rps5) from Cyanidium caldarium (Red alga).